The following is a 537-amino-acid chain: Chaperonin GroEL 2 (537 aa).

ATP contacts are provided by residues 29–32, 86–90, Gly-413, 477–479, and Asp-493; these read TLGP, DGTTT, and NAA.

It belongs to the chaperonin (HSP60) family. As to quaternary structure, forms a cylinder of 14 subunits composed of two heptameric rings stacked back-to-back. Interacts with the co-chaperonin GroES.

The protein localises to the cytoplasm. It catalyses the reaction ATP + H2O + a folded polypeptide = ADP + phosphate + an unfolded polypeptide.. Functionally, together with its co-chaperonin GroES, plays an essential role in assisting protein folding. The GroEL-GroES system forms a nano-cage that allows encapsulation of the non-native substrate proteins and provides a physical environment optimized to promote and accelerate protein folding. The polypeptide is Chaperonin GroEL 2 (Rhodococcus jostii (strain RHA1)).